Here is a 453-residue protein sequence, read N- to C-terminus: Protein FAM117A (453 aa).

Residues 1 to 25 (MAGAAAGGRGGGAWGPGRGGAGGLR) show a composition bias toward gly residues. Residues 1–45 (MAGAAAGGRGGGAWGPGRGGAGGLRRGCSPPAPAGSPRAGLQPLR) form a disordered region. Phosphoserine occurs at positions 29 and 67. The stretch at 149-175 (TDHRKEISKLKQQLQRTKLSRSGKEKE) forms a coiled coil. The interval 159 to 201 (KQQLQRTKLSRSGKEKERGSPLLGDHAVRGALRASPPSFPSGS) is disordered. Ser178, Ser193, Ser201, and Ser213 each carry phosphoserine. Low complexity predominate over residues 269–278 (SSPSMSLASP). Residues 269 to 320 (SSPSMSLASPQPCGLASHEEHRGAAEELASTPNDKASSPGHPAFLEDGSPSP) form a disordered region. Residue Thr299 is modified to Phosphothreonine. Phosphoserine occurs at positions 319 and 327. Phosphothreonine is present on Thr354. Over residues 406 to 416 (GSPLPPASPRP) the composition is skewed to pro residues. Residues 406–453 (GSPLPPASPRPPPRKDPEASKASPLPFEPWQRTPPSEEPVLFQSSLMV) are disordered. Phosphoserine is present on residues Ser413 and Ser428.

Belongs to the FAM117 family.

The protein is Protein FAM117A (FAM117A) of Homo sapiens (Human).